The following is a 442-amino-acid chain: N-acetyl-S-alkylcysteine sulfoxide monooxygenase (442 aa).

6 residues coordinate FMN: D58, T95, H145, Y149, S219, and S220.

It belongs to the NtaA/SnaA/DszA monooxygenase family. In terms of assembly, homodimer.

It carries out the reaction (R)-N-acetyl-S-benzyl-L-cysteine sulfoxide + FMNH2 + O2 = N-acetyl-S-hydroxy-L-cysteine + benzaldehyde + FMN + H2O + H(+). It functions in the pathway amino-acid metabolism. Its function is as follows. Involved in a cysteine salvage pathway from S-alkylcysteine. Catalyzes the C-S bond cleavage in N-acetyl-S-benzyl-L-cysteine sulfoxide leading to N-acetyl-S-hydroxy-L-cysteine and benzaldehyde. This pathway is likely important in the catabolism of alkylated cysteine generated by proteolysis of alkylated glutathione formed in the detoxification of a wide range of electrophiles. Has much less efficient activity with N-acetyl-S-methyl-L-cysteine sulfoxide as substrate. Cannot use S-alkylated L-cysteine sulfones and ketone analogs as substrates, demonstrating that the sulfoxide is required for activity. This chain is N-acetyl-S-alkylcysteine sulfoxide monooxygenase, found in Bacillus subtilis (strain 168).